We begin with the raw amino-acid sequence, 122 residues long: MPITTSAQPRKQRLALFNAPLHLRHKLFNAKLSPELEKKLGVKRLPVRRGDTVMILRGDFKGVTGKVVRVDLKKVRIYVEGATRTNSRGQTVYYPIHPSKVMIVDVDMSDKARQKIIERRKK.

The protein belongs to the universal ribosomal protein uL24 family. In terms of assembly, part of the 50S ribosomal subunit.

One of two assembly initiator proteins, it binds directly to the 5'-end of the 23S rRNA, where it nucleates assembly of the 50S subunit. Functionally, located at the polypeptide exit tunnel on the outside of the subunit. This Pyrobaculum arsenaticum (strain DSM 13514 / JCM 11321 / PZ6) protein is Large ribosomal subunit protein uL24.